A 94-amino-acid polypeptide reads, in one-letter code: Co-chaperonin GroES (94 aa).

The protein belongs to the GroES chaperonin family. As to quaternary structure, heptamer of 7 subunits arranged in a ring. Interacts with the chaperonin GroEL.

The protein localises to the cytoplasm. In terms of biological role, together with the chaperonin GroEL, plays an essential role in assisting protein folding. The GroEL-GroES system forms a nano-cage that allows encapsulation of the non-native substrate proteins and provides a physical environment optimized to promote and accelerate protein folding. GroES binds to the apical surface of the GroEL ring, thereby capping the opening of the GroEL channel. This Bacillus mycoides (strain KBAB4) (Bacillus weihenstephanensis) protein is Co-chaperonin GroES.